Reading from the N-terminus, the 75-residue chain is Small ribosomal subunit protein bS18 (75 aa).

Position 2 is an N-acetylalanine (alanine 2).

The protein belongs to the bacterial ribosomal protein bS18 family. As to quaternary structure, part of the 30S ribosomal subunit. Forms a tight heterodimer with protein bS6.

In terms of biological role, binds as a heterodimer with protein bS6 to the central domain of the 16S rRNA, where it helps stabilize the platform of the 30S subunit. This is Small ribosomal subunit protein bS18 (rpsR) from Salmonella typhimurium (strain LT2 / SGSC1412 / ATCC 700720).